The primary structure comprises 308 residues: S-crystallin SL18 (308 aa).

The 79-residue stretch at 2-80 (PKYTLYYFNS…YLARQFGFYG (79 aa)) folds into the GST N-terminal domain. The tract at residues 165 to 205 (EMRSQDSMVEPPSQKLSPELESQSSLCSERPQCGPPDPMMG) is disordered. Polar residues predominate over residues 178 to 191 (QKLSPELESQSSLC). The GST C-terminal domain occupies 185-308 (ESQSSLCSER…YFTLRNYTDF (124 aa)).

This sequence belongs to the GST superfamily. As to expression, lens.

Functionally, S-crystallins are structural components of squids and octopi eye lens. Contains relatively little if any GST activity. This chain is S-crystallin SL18, found in Nototodarus sloanii (Wellington flying squid).